The chain runs to 103 residues: MIPGELHIADGIIELNVNREKVIVMVINNGDRPIQVGSHFHFYEVNNALFFNRNFALGFRLNVPSGTSIRFEPGQTREVELVRYSGELKIVGFCKKIMGKLSK.

Belongs to the urease beta subunit family. In terms of assembly, heterotrimer of UreA (gamma), UreB (beta) and UreC (alpha) subunits. Three heterotrimers associate to form the active enzyme.

The protein resides in the cytoplasm. It catalyses the reaction urea + 2 H2O + H(+) = hydrogencarbonate + 2 NH4(+). It functions in the pathway nitrogen metabolism; urea degradation; CO(2) and NH(3) from urea (urease route): step 1/1. The protein is Urease subunit beta of Blochmanniella floridana.